The primary structure comprises 188 residues: ATP synthase subunit b 1 (188 aa).

A helical membrane pass occupies residues 35–55 (VHFGSHLFWLAISFGLFYLFI).

Belongs to the ATPase B chain family. F-type ATPases have 2 components, F(1) - the catalytic core - and F(0) - the membrane proton channel. F(1) has five subunits: alpha(3), beta(3), gamma(1), delta(1), epsilon(1). F(0) has three main subunits: a(1), b(2) and c(10-14). The alpha and beta chains form an alternating ring which encloses part of the gamma chain. F(1) is attached to F(0) by a central stalk formed by the gamma and epsilon chains, while a peripheral stalk is formed by the delta and b chains.

Its subcellular location is the cell inner membrane. Functionally, f(1)F(0) ATP synthase produces ATP from ADP in the presence of a proton or sodium gradient. F-type ATPases consist of two structural domains, F(1) containing the extramembraneous catalytic core and F(0) containing the membrane proton channel, linked together by a central stalk and a peripheral stalk. During catalysis, ATP synthesis in the catalytic domain of F(1) is coupled via a rotary mechanism of the central stalk subunits to proton translocation. In terms of biological role, component of the F(0) channel, it forms part of the peripheral stalk, linking F(1) to F(0). This is ATP synthase subunit b 1 from Bartonella henselae (strain ATCC 49882 / DSM 28221 / CCUG 30454 / Houston 1) (Rochalimaea henselae).